The sequence spans 124 residues: Small ribosomal subunit protein bS6 (124 aa).

It belongs to the bacterial ribosomal protein bS6 family.

Functionally, binds together with bS18 to 16S ribosomal RNA. This chain is Small ribosomal subunit protein bS6, found in Actinobacillus pleuropneumoniae serotype 7 (strain AP76).